An 810-amino-acid chain; its full sequence is Ecotropic viral integration site 5 protein homolog (810 aa).

The segment at 1 to 483 (MVTNKMTAAF…EAESQCALKE (483 aa)) is interaction with alpha-tubulin, gamma-tubulin, BIRC5 and FBXO5. Disordered regions lie at residues 49–80 (VASP…QLSP) and 98–123 (TDSK…SSSA). Low complexity predominate over residues 51–80 (SPSTSLHTTSSSTTLSTPALSPSSPSQLSP). Residues Ser-102 and Ser-113 each carry the phosphoserine modification. A compositionally biased stretch (low complexity) spans 103-123 (LRSVNGSRRNSGSSLVSSSSA). Residues 128 to 693 (SHLEEDSWIL…LNKSDSNQYI (566 aa)) form a dimerization region. The Rab-GAP TBC domain maps to 163 to 348 (GIPHHFRAIV…RIFDIFMSEG (186 aa)). Residues 377–810 (QHFQKVIPHQ…RRRESYSTTV (434 aa)) form a targeting to the centrosomes region. Positions 406–716 (KKMKKLEKEY…LRCLKGQRGF (311 aa)) form a coiled coil. The interval 487-810 (KVLDIEKRNN…RRRESYSTTV (324 aa)) is interaction with AURKB and INCENP. A phosphoserine mark is found at Ser-497, Ser-689, Ser-776, and Ser-778. A disordered region spans residues 756–810 (GFPLHGKSGSMSLDPAVADGSESETEDSVLETRESNQVVQKERPPRRRESYSTTV). Residues 785 to 810 (LETRESNQVVQKERPPRRRESYSTTV) show a composition bias toward basic and acidic residues.

In terms of assembly, dimeric and monomeric. Interacts with alpha- and gamma-tubulin. Interacts with FBXO5. Interacts with the chromosome passenger complex (CPC) which is at least composed of AURKB/aurora-B, BIRC5/survivin, CDCA8/borealin and INCENP. Post-translationally, probably phosphorylated by PLK1; may be required for degradation during mitosis. Ubiquitinated. Degradation during prophase is ubiquitin-dependent. In terms of tissue distribution, expressed in various cell lines (at protein level). Expressed in a wide range of tissues including brain and adrenal.

The protein localises to the nucleus. It localises to the cytoplasm. Its subcellular location is the cytoskeleton. It is found in the microtubule organizing center. The protein resides in the centrosome. The protein localises to the spindle. Functionally, functions as a regulator of cell cycle progression by stabilizing the FBXO5 protein and promoting cyclin-A accumulation during interphase. May play a role in cytokinesis. The sequence is that of Ecotropic viral integration site 5 protein homolog (EVI5) from Homo sapiens (Human).